We begin with the raw amino-acid sequence, 436 residues long: [Pyruvate dehydrogenase (acetyl-transferring)] kinase isozyme 1, mitochondrial (436 aa).

Residues 1-28 constitute a mitochondrion transit peptide; the sequence is MRLARLLRGAALAGPGPGLRAAGFSRSF. At tyrosine 136 the chain carries Phosphotyrosine; by FGFR1. In terms of domain architecture, Histidine kinase spans 163-393; it reads YKESFGVDPV…DAVIYIKALS (231 aa). Tyrosine 243 bears the Phosphotyrosine; by FGFR1, ABL1, FLT3 and JAK2 mark. Tyrosine 244 bears the Phosphotyrosine; by FGFR1 mark. Residues 279–286, aspartate 318, 337–338, and 354–359 each bind ATP; these read ELFKNAMR, ST, and GFGYGL. Phosphothreonine is present on threonine 338. Lysine 405 carries the post-translational modification N6-succinyllysine.

It belongs to the PDK/BCKDK protein kinase family. Homodimer, and heterodimer with PDK2. Interacts with the pyruvate dehydrogenase complex subunit DLAT, and is part of the multimeric pyruvate dehydrogenase complex that contains multiple copies of pyruvate dehydrogenase (E1), dihydrolipoamide acetyltransferase (DLAT, E2) and lipoamide dehydrogenase (DLD, E3). Interacts with phosphoglycerate kinase PGK1; the interaction is direct, occurs under hypoxic conditions and leads to PDK1-mediated inhibition of pyruvate dehydrogenase complex activity. In terms of processing, phosphorylated by constitutively activated ABL1, FGFR1, FLT3 and JAK2 (in vitro), and this may also occur in cancer cells that express constitutively activated ABL1, FGFR1, FLT3 and JAK2. Phosphorylation at Tyr-243 and Tyr-244 strongly increases kinase activity, while phosphorylation at Tyr-136 has a lesser effect. Phosphorylated under hypoxic conditions at Thr-338 by phosphoglycerate kinase PGK1 which has an activating effect. As to expression, expressed predominantly in the heart. Detected at lower levels in liver, skeletal muscle and pancreas.

Its subcellular location is the mitochondrion matrix. It carries out the reaction L-seryl-[pyruvate dehydrogenase E1 alpha subunit] + ATP = O-phospho-L-seryl-[pyruvate dehydrogenase E1 alpha subunit] + ADP + H(+). Its activity is regulated as follows. Activity is enhanced by binding to the pyruvate dehydrogenase subunit DLAT. Inhibited by AZD7545; this compound interferes with DLAT binding and thereby inhibits kinase activity. Inhibited by dichloroacetate and radicicol. Activated under hypoxic conditions by phosphoglycerate kinase PGK1-mediated phosphorylation at Thr-338. Its function is as follows. Kinase that plays a key role in regulation of glucose and fatty acid metabolism and homeostasis via phosphorylation of the pyruvate dehydrogenase subunits PDHA1 and PDHA2. This inhibits pyruvate dehydrogenase activity, and thereby regulates metabolite flux through the tricarboxylic acid cycle, down-regulates aerobic respiration and inhibits the formation of acetyl-coenzyme A from pyruvate. Plays an important role in cellular responses to hypoxia and is important for cell proliferation under hypoxia. In Homo sapiens (Human), this protein is [Pyruvate dehydrogenase (acetyl-transferring)] kinase isozyme 1, mitochondrial (PDK1).